Consider the following 83-residue polypeptide: Small ribosomal subunit protein bS16 (83 aa).

Belongs to the bacterial ribosomal protein bS16 family.

The sequence is that of Small ribosomal subunit protein bS16 from Polaromonas sp. (strain JS666 / ATCC BAA-500).